A 471-amino-acid chain; its full sequence is 3-isopropylmalate dehydratase large subunit (471 aa).

[4Fe-4S] cluster-binding residues include C347, C407, and C410.

The protein belongs to the aconitase/IPM isomerase family. LeuC type 1 subfamily. As to quaternary structure, heterodimer of LeuC and LeuD. [4Fe-4S] cluster serves as cofactor.

It carries out the reaction (2R,3S)-3-isopropylmalate = (2S)-2-isopropylmalate. The protein operates within amino-acid biosynthesis; L-leucine biosynthesis; L-leucine from 3-methyl-2-oxobutanoate: step 2/4. Its function is as follows. Catalyzes the isomerization between 2-isopropylmalate and 3-isopropylmalate, via the formation of 2-isopropylmaleate. This is 3-isopropylmalate dehydratase large subunit from Geobacillus thermodenitrificans (strain NG80-2).